An 819-amino-acid polypeptide reads, in one-letter code: Leucine--tRNA ligase (819 aa).

The 'HIGH' region motif lies at 40–51; sequence PYPSGAGLHVGH. The 'KMSKS' region motif lies at 600–604; the sequence is KMSKS. Position 603 (K603) interacts with ATP.

The protein belongs to the class-I aminoacyl-tRNA synthetase family.

It is found in the cytoplasm. The enzyme catalyses tRNA(Leu) + L-leucine + ATP = L-leucyl-tRNA(Leu) + AMP + diphosphate. This is Leucine--tRNA ligase from Chlamydia trachomatis serovar A (strain ATCC VR-571B / DSM 19440 / HAR-13).